The following is a 479-amino-acid chain: Ribosomal RNA small subunit methyltransferase F (479 aa).

Residues 125–131, Glu149, Asp176, and Asp194 each bind S-adenosyl-L-methionine; that span reads AAAPGSK. Catalysis depends on Cys247, which acts as the Nucleophile.

It belongs to the class I-like SAM-binding methyltransferase superfamily. RsmB/NOP family.

The protein localises to the cytoplasm. The catalysed reaction is cytidine(1407) in 16S rRNA + S-adenosyl-L-methionine = 5-methylcytidine(1407) in 16S rRNA + S-adenosyl-L-homocysteine + H(+). Specifically methylates the cytosine at position 1407 (m5C1407) of 16S rRNA. The polypeptide is Ribosomal RNA small subunit methyltransferase F (Escherichia coli O157:H7 (strain EC4115 / EHEC)).